Here is a 381-residue protein sequence, read N- to C-terminus: tRNA pseudouridine synthase D (381 aa).

The active-site Nucleophile is the Asp81. A TRUD domain is found at 160 to 335 (GMPNYFGSQR…TLGSRRFFWV (176 aa)).

The protein belongs to the pseudouridine synthase TruD family.

The enzyme catalyses uridine(13) in tRNA = pseudouridine(13) in tRNA. Responsible for synthesis of pseudouridine from uracil-13 in transfer RNAs. The polypeptide is tRNA pseudouridine synthase D (Helicobacter pylori (strain HPAG1)).